The following is a 106-amino-acid chain: Nucleoid-associated protein Smal_0858 (106 aa).

Positions 81-106 (IDAESKSKMGSATAGMQLPPGMKLPF) are disordered.

This sequence belongs to the YbaB/EbfC family. In terms of assembly, homodimer.

Its subcellular location is the cytoplasm. It is found in the nucleoid. In terms of biological role, binds to DNA and alters its conformation. May be involved in regulation of gene expression, nucleoid organization and DNA protection. This is Nucleoid-associated protein Smal_0858 from Stenotrophomonas maltophilia (strain R551-3).